The following is a 296-amino-acid chain: uncharacterized protein (296 aa).

CBS domains are found at residues 176-232 (GIKE…DKKV) and 236-292 (MRRD…KFPE).

This is an uncharacterized protein from Methanocaldococcus jannaschii (strain ATCC 43067 / DSM 2661 / JAL-1 / JCM 10045 / NBRC 100440) (Methanococcus jannaschii).